A 347-amino-acid chain; its full sequence is NADH-ubiquinone oxidoreductase chain 2 (347 aa).

The next 10 membrane-spanning stretches (helical) occupy residues 13–33, 55–75, 96–116, 122–142, 151–171, 178–198, 199–219, 237–257, 277–297, and 326–346; these read VFTG…WLGL, AAIK…MAIL, LMIV…FWVP, VPLT…ISIM, TNIL…GGLN, ILAY…PYNP, NITI…FLIL, LTWL…LPPL, IAPT…ARLI, and LPTL…ILSI.

This sequence belongs to the complex I subunit 2 family. As to quaternary structure, core subunit of respiratory chain NADH dehydrogenase (Complex I) which is composed of 45 different subunits. Interacts with TMEM242.

Its subcellular location is the mitochondrion inner membrane. It catalyses the reaction a ubiquinone + NADH + 5 H(+)(in) = a ubiquinol + NAD(+) + 4 H(+)(out). Functionally, core subunit of the mitochondrial membrane respiratory chain NADH dehydrogenase (Complex I) which catalyzes electron transfer from NADH through the respiratory chain, using ubiquinone as an electron acceptor. Essential for the catalytic activity and assembly of complex I. This is NADH-ubiquinone oxidoreductase chain 2 from Pongo pygmaeus (Bornean orangutan).